The chain runs to 1058 residues: Carbamoyl phosphate synthase large chain (1058 aa).

A carboxyphosphate synthetic domain region spans residues 1 to 401 (MPKRTDIQKI…SLLKACRSLE (401 aa)). Residues arginine 129, arginine 169, glycine 175, glycine 176, arginine 208, isoleucine 210, glutamate 215, glycine 241, isoleucine 242, histidine 243, glutamine 284, and glutamate 298 each coordinate ATP. One can recognise an ATP-grasp 1 domain in the interval 133 to 327 (KQLMEELEQP…IAKLAAKIAV (195 aa)). 3 residues coordinate Mg(2+): glutamine 284, glutamate 298, and asparagine 300. Glutamine 284, glutamate 298, and asparagine 300 together coordinate Mn(2+). Positions 402–546 (IGVHHNEIPE…YSTYGWENES (145 aa)) are oligomerization domain. A carbamoyl phosphate synthetic domain region spans residues 547 to 929 (IRSDKESVLV…ALYKAFEASY (383 aa)). Residues 671-861 (EQALKELDIP…MAQVATKLIL (191 aa)) form the ATP-grasp 2 domain. Residues arginine 707, serine 746, isoleucine 748, glutamate 752, glycine 777, valine 778, histidine 779, serine 780, glutamine 820, and glutamate 832 each coordinate ATP. Glutamine 820, glutamate 832, and asparagine 834 together coordinate Mg(2+). Glutamine 820, glutamate 832, and asparagine 834 together coordinate Mn(2+). Residues 930–1058 (LHLPTFGNVV…ESRSFVTEAI (129 aa)) form the MGS-like domain. Residues 930-1058 (LHLPTFGNVV…ESRSFVTEAI (129 aa)) are allosteric domain.

This sequence belongs to the CarB family. Composed of two chains; the small (or glutamine) chain promotes the hydrolysis of glutamine to ammonia, which is used by the large (or ammonia) chain to synthesize carbamoyl phosphate. Tetramer of heterodimers (alpha,beta)4. Mg(2+) is required as a cofactor. Requires Mn(2+) as cofactor.

The catalysed reaction is hydrogencarbonate + L-glutamine + 2 ATP + H2O = carbamoyl phosphate + L-glutamate + 2 ADP + phosphate + 2 H(+). It catalyses the reaction hydrogencarbonate + NH4(+) + 2 ATP = carbamoyl phosphate + 2 ADP + phosphate + 2 H(+). It participates in amino-acid biosynthesis; L-arginine biosynthesis; carbamoyl phosphate from bicarbonate: step 1/1. Its pathway is pyrimidine metabolism; UMP biosynthesis via de novo pathway; (S)-dihydroorotate from bicarbonate: step 1/3. Large subunit of the glutamine-dependent carbamoyl phosphate synthetase (CPSase). CPSase catalyzes the formation of carbamoyl phosphate from the ammonia moiety of glutamine, carbonate, and phosphate donated by ATP, constituting the first step of 2 biosynthetic pathways, one leading to arginine and/or urea and the other to pyrimidine nucleotides. The large subunit (synthetase) binds the substrates ammonia (free or transferred from glutamine from the small subunit), hydrogencarbonate and ATP and carries out an ATP-coupled ligase reaction, activating hydrogencarbonate by forming carboxy phosphate which reacts with ammonia to form carbamoyl phosphate. This chain is Carbamoyl phosphate synthase large chain, found in Streptococcus pneumoniae serotype 19F (strain G54).